The sequence spans 123 residues: Large ribosomal subunit protein uL14 (123 aa).

The protein belongs to the universal ribosomal protein uL14 family. As to quaternary structure, part of the 50S ribosomal subunit. Forms a cluster with proteins L3 and L19. In the 70S ribosome, L14 and L19 interact and together make contacts with the 16S rRNA in bridges B5 and B8.

Its function is as follows. Binds to 23S rRNA. Forms part of two intersubunit bridges in the 70S ribosome. The polypeptide is Large ribosomal subunit protein uL14 (Serratia proteamaculans (strain 568)).